A 354-amino-acid polypeptide reads, in one-letter code: E2F transcription factor-like E2FF (354 aa).

Residues 21 to 86 (RKEKSLGVLV…RGKNQYSWKG (66 aa)) mediate DNA binding. The interval 104–143 (ERLGYSSSNNSDKVSNGCEREEPLTLTPDDQENSSSSKMD) is disordered. The segment covering 108 to 117 (YSSSNNSDKV) has biased composition (polar residues). Residues 145–225 (KKEKSLWLLA…TRKPAYRWLG (81 aa)) mediate DNA binding.

It belongs to the E2F/DP family. In terms of tissue distribution, high expression in young cotyledons and leaves, hypocotyls, shoot apical meristem, roots and mature pollen grains, moderate in developing trichomes, flowers and at early stages of developing anthers, and barely detectable in mature leaves. Not detected in primary root meristem, emerging lateral roots, pistils, developing embryos and siliques.

Its subcellular location is the nucleus. The protein resides in the cytoplasm. Its function is as follows. Inhibitor of E2F-dependent activation of gene expression. Binds specifically the E2 recognition site without interacting with DP proteins and prevents transcription activation by E2F/DP heterodimers. Does not bind retinoblastoma-related proteins. Acts as a growth regulator but is not associated with changes in the expression of cell cycle marker genes or in nuclear ploidy levels. Has no effect on cell proliferation, but may repress cell wall biosynthesis genes during cell elongation in differentiated cells. This chain is E2F transcription factor-like E2FF (E2FF), found in Arabidopsis thaliana (Mouse-ear cress).